A 195-amino-acid chain; its full sequence is HTH-type transcriptional regulator BetI (195 aa).

The HTH tetR-type domain maps to 8–68 (SIRRRQLIDA…ATMRDITSQL (61 aa)). The segment at residues 31–50 (TIAQIARRAGVSTGIISHYF) is a DNA-binding region (H-T-H motif).

It functions in the pathway amine and polyamine biosynthesis; betaine biosynthesis via choline pathway [regulation]. In terms of biological role, repressor involved in the biosynthesis of the osmoprotectant glycine betaine. It represses transcription of the choline transporter BetT and the genes of BetAB involved in the synthesis of glycine betaine. The protein is HTH-type transcriptional regulator BetI of Escherichia coli (strain K12 / DH10B).